The following is a 200-amino-acid chain: MNIIELFGPLQEIIFFILEIGVILGSLGVVLLSNIVYSAFFLGLVFFCISLLYFALNADFVAAAQILIYVGAVNVLIVFAVMLINKPESLKIFPVWTVGDKITLAICLTSFFLLVNIILNTSWSNITVITESKGFLESNFTQNVQRIGSLLLTQYLLPFELLSIVLLVALIGAIVIARRENLIETNKKKVLQIKKSPTTF.

The next 5 helical transmembrane spans lie at 13-33 (IIFF…VLLS), 35-55 (IVYS…LYFA), 64-84 (AQIL…VMLI), 102-122 (ITLA…LNTS), and 156-176 (LLPF…AIVI).

It belongs to the complex I subunit 6 family. As to quaternary structure, NDH is composed of at least 16 different subunits, 5 of which are encoded in the nucleus.

The protein localises to the plastid. It is found in the chloroplast thylakoid membrane. The enzyme catalyses a plastoquinone + NADH + (n+1) H(+)(in) = a plastoquinol + NAD(+) + n H(+)(out). It catalyses the reaction a plastoquinone + NADPH + (n+1) H(+)(in) = a plastoquinol + NADP(+) + n H(+)(out). Functionally, NDH shuttles electrons from NAD(P)H:plastoquinone, via FMN and iron-sulfur (Fe-S) centers, to quinones in the photosynthetic chain and possibly in a chloroplast respiratory chain. The immediate electron acceptor for the enzyme in this species is believed to be plastoquinone. Couples the redox reaction to proton translocation, and thus conserves the redox energy in a proton gradient. This chain is NAD(P)H-quinone oxidoreductase subunit 6, chloroplastic (ndhG), found in Physcomitrium patens (Spreading-leaved earth moss).